A 503-amino-acid chain; its full sequence is Maturase K (503 aa).

Belongs to the intron maturase 2 family. MatK subfamily.

The protein localises to the plastid. It is found in the chloroplast. In terms of biological role, usually encoded in the trnK tRNA gene intron. Probably assists in splicing its own and other chloroplast group II introns. In Liquidambar styraciflua (Sweetgum tree), this protein is Maturase K.